We begin with the raw amino-acid sequence, 475 residues long: Polyphosphate:AMP phosphotransferase (475 aa).

PPK2 regions lie at residues 18-222 (LDLI…LTAL) and 256-472 (ANYK…KADR).

The protein belongs to the polyphosphate kinase 2 (PPK2) family. Class II subfamily. In terms of assembly, homodimer and homotetramer. Mg(2+) is required as a cofactor.

The catalysed reaction is [phosphate](n) + ADP = [phosphate](n+1) + AMP. In terms of biological role, uses inorganic polyphosphate (polyP) as a donor to convert AMP to ADP. Can also use GMP, UMP, CMP, TMP or deoxyribonucleoside monophosphates, with lower efficiency. Cannot use low-molecular weight polyP as donors. Can also catalyze the synthesis of polyP from ADP or GDP, with lower efficiency. This Acinetobacter johnsonii protein is Polyphosphate:AMP phosphotransferase.